The chain runs to 515 residues: ATP synthase subunit alpha (515 aa).

169–176 is a binding site for ATP; it reads GDRQTGKT.

This sequence belongs to the ATPase alpha/beta chains family. As to quaternary structure, F-type ATPases have 2 components, CF(1) - the catalytic core - and CF(0) - the membrane proton channel. CF(1) has five subunits: alpha(3), beta(3), gamma(1), delta(1), epsilon(1). CF(0) has three main subunits: a(1), b(2) and c(9-12). The alpha and beta chains form an alternating ring which encloses part of the gamma chain. CF(1) is attached to CF(0) by a central stalk formed by the gamma and epsilon chains, while a peripheral stalk is formed by the delta and b chains.

It is found in the cell inner membrane. It catalyses the reaction ATP + H2O + 4 H(+)(in) = ADP + phosphate + 5 H(+)(out). Produces ATP from ADP in the presence of a proton gradient across the membrane. The alpha chain is a regulatory subunit. The polypeptide is ATP synthase subunit alpha (Neisseria gonorrhoeae (strain ATCC 700825 / FA 1090)).